Here is a 368-residue protein sequence, read N- to C-terminus: E3 ubiquitin-protein ligase makorin (368 aa).

2 consecutive C3H1-type zinc fingers follow at residues 2 to 29 (STKRVLCKFFMHGACLKGEYCEFSHDWN) and 30 to 57 (DQPNNVCTFYQKGSCSYGSRCRYDHVKV). Residues 58–81 (SRNPTVAPPPSSSTTTRASSSLQP) form a disordered region. Residues 69–78 (SSTTTRASSS) are compositionally biased toward low complexity. The segment at 147–174 (PADLPICSFAAGGNCPYGEECPQMHGDL) adopts a C3H1-type 3 zinc-finger fold. Positions 175–202 (CTTCGKMCLHPYRPDEREEHTKLCEKNH) are makorin-type Cys-His. Residues 216–274 (CSVCLDRVLSKPTAAERKFGLLSECDHPFCISCIRNWRNNSPTSGMDVNSALRACPICR) form an RING-type zinc finger. The segment at 303-332 (KLKSIDCKYFDFGTGTCPFGSSCFYKHAYR) adopts a C3H1-type 4 zinc-finger fold.

As to expression, expressed in primary roots and leaves. Detected in vascular bundle tissues.

It catalyses the reaction S-ubiquitinyl-[E2 ubiquitin-conjugating enzyme]-L-cysteine + [acceptor protein]-L-lysine = [E2 ubiquitin-conjugating enzyme]-L-cysteine + N(6)-ubiquitinyl-[acceptor protein]-L-lysine.. The protein operates within protein modification; protein ubiquitination. In terms of biological role, E3 ubiquitin ligase catalyzing the covalent attachment of ubiquitin moieties onto substrate proteins. This chain is E3 ubiquitin-protein ligase makorin (MKRN), found in Oryza sativa subsp. japonica (Rice).